The sequence spans 436 residues: Adenylosuccinate synthetase (436 aa).

GTP-binding positions include Gly22–Lys28 and Gly50–Glu52. Catalysis depends on Asp23, which acts as the Proton acceptor. Mg(2+) is bound by residues Asp23 and Gly50. IMP contacts are provided by residues Asp23–Lys26, Asn48–His51, Thr141, Arg155, Asn231, Thr246, and Arg310. His51 functions as the Proton donor in the catalytic mechanism. Val306–Arg312 serves as a coordination point for substrate. GTP is bound by residues Arg312, Lys338–Asp340, and Gly424–Gly426.

This sequence belongs to the adenylosuccinate synthetase family. In terms of assembly, homodimer. The cofactor is Mg(2+).

The protein resides in the cytoplasm. It catalyses the reaction IMP + L-aspartate + GTP = N(6)-(1,2-dicarboxyethyl)-AMP + GDP + phosphate + 2 H(+). Its pathway is purine metabolism; AMP biosynthesis via de novo pathway; AMP from IMP: step 1/2. In terms of biological role, plays an important role in the salvage pathway for purine nucleotide biosynthesis. Catalyzes the first committed step in the biosynthesis of AMP from IMP. The sequence is that of Adenylosuccinate synthetase from Babesia bovis.